A 177-amino-acid chain; its full sequence is Peroxiredoxin-2 (177 aa).

Alanine 2 bears the N-acetylalanine mark. One can recognise a Thioredoxin domain in the interval 6–164 (ARIGKPAPDF…ALRLVQAFQY (159 aa)). The active-site Cysteine sulfenic acid (-SOH) intermediate is cysteine 51. The residue at position 112 (serine 112) is a Phosphoserine.

Belongs to the peroxiredoxin family. AhpC/Prx1 subfamily. In terms of assembly, homodimer; disulfide-linked, upon oxidation. 5 homodimers assemble to form a ring-like decamer. Interacts with TIPIN. Post-translationally, the enzyme can be inactivated by further oxidation of the cysteine sulfenic acid (C(P)-SOH) to sulphinic acid (C(P)-SO2H) instead of its condensation to a disulfide bond. It can be reactivated by forming a transient disulfide bond with sulfiredoxin SRXN1, which reduces the cysteine sulfinic acid in an ATP- and Mg-dependent manner. In terms of processing, acetylation increases resistance to transition to high molecular-mass complexes. Deacetylated by HDAC6 which decreases reducing activity.

It is found in the cytoplasm. It catalyses the reaction a hydroperoxide + [thioredoxin]-dithiol = an alcohol + [thioredoxin]-disulfide + H2O. Its function is as follows. Thiol-specific peroxidase that catalyzes the reduction of hydrogen peroxide and organic hydroperoxides to water and alcohols, respectively. Plays a role in cell protection against oxidative stress by detoxifying peroxides and as sensor of hydrogen peroxide-mediated signaling events. Might participate in the signaling cascades of growth factors and tumor necrosis factor-alpha by regulating the intracellular concentrations of H(2)O(2). The protein is Peroxiredoxin-2 (PRDX2) of Pongo abelii (Sumatran orangutan).